We begin with the raw amino-acid sequence, 294 residues long: Shell matrix protein (294 aa).

In terms of tissue distribution, component of the organic matrix of calcified shell layers like nacre and prisms.

It is found in the secreted. The chain is Shell matrix protein from Mytilus californianus (California mussel).